The sequence spans 399 residues: Elongation factor Tu 1 (399 aa).

The 200-residue stretch at 10–209 folds into the tr-type G domain; that stretch reads KPHVNIGTIG…QVDTYIPEPE (200 aa). A G1 region spans residues 19 to 26; sequence GHVDHGKT. Residue 19–26 coordinates GTP; sequence GHVDHGKT. A Mg(2+)-binding site is contributed by T26. Positions 60-64 are G2; the sequence is GITIA. Positions 81 to 84 are G3; it reads DCPG. Residues 81–85 and 136–139 each bind GTP; these read DCPGH and NKAD. A G4 region spans residues 136–139; the sequence is NKAD. Residues 174-176 form a G5 region; the sequence is SAL.

The protein belongs to the TRAFAC class translation factor GTPase superfamily. Classic translation factor GTPase family. EF-Tu/EF-1A subfamily. In terms of assembly, monomer.

Its subcellular location is the cytoplasm. The enzyme catalyses GTP + H2O = GDP + phosphate + H(+). In terms of biological role, GTP hydrolase that promotes the GTP-dependent binding of aminoacyl-tRNA to the A-site of ribosomes during protein biosynthesis. This Syntrophotalea carbinolica (strain DSM 2380 / NBRC 103641 / GraBd1) (Pelobacter carbinolicus) protein is Elongation factor Tu 1.